The primary structure comprises 295 residues: Protease HtpX (295 aa).

2 helical membrane-spanning segments follow: residues 4-24 and 42-62; these read ILLF…TLSL and QLLV…LFIS. Residue H147 participates in Zn(2+) binding. The active site involves E148. Zn(2+) is bound at residue H151. 2 helical membrane-spanning segments follow: residues 158–178 and 199–219; these read VTLA…ARII and ITTI…VMWF. Zn(2+) is bound at residue E224.

The protein belongs to the peptidase M48B family. It depends on Zn(2+) as a cofactor.

It localises to the cell inner membrane. This Pseudomonas syringae pv. tomato (strain ATCC BAA-871 / DC3000) protein is Protease HtpX.